The primary structure comprises 210 residues: HTH-type transcriptional regulator TtgR (210 aa).

The HTH tetR-type domain maps to 10–70 (QETRAQIIEA…ALLDSLHETH (61 aa)). Residues 33–52 (TLADIAELAGVTRGAIYWHF) constitute a DNA-binding region (H-T-H motif).

As to quaternary structure, homodimer.

In terms of biological role, represses expression from the ttgABC operon promoter and its own expression. Binds to a promoter region between the divergently transcribed ttgR and ttgABC genes/operons; in the presence of chloramphenicol or tetracycline this binding no longer occurs and ttgR and ttgABC are derepressed. This suggests that TtgR binds these antibiotics. The polypeptide is HTH-type transcriptional regulator TtgR (ttgR) (Pseudomonas putida (strain DOT-T1E)).